Reading from the N-terminus, the 368-residue chain is MIIKKNKKIIVAMSGGVDSSVCAWILKKQNYQVEGLFMKNWEEDDQEGYCSSTKDLLDAENICKKLNIYLHKMNFSSEYWEYVFENFLKEYKKGNTPNPDILCNKEIKFNMFLNYSIQELKADYIATGHYARIKKINGKYLLLKGIDTNKDQSYFLYTLNSIQLRKILFPIGHLKKNKVRNIAKKIDLKIAKKKDSTGICFIGPKKLKNFLSLYISEKKGDIVTISGRVIGKHSGVFYYTIGQRQGLGIGGIKGEYNIPWYVVEKNIEKNILIVAQGSYNKHLMSIGLIAKNINWINYDQLSFPLSCMAKTRYRQKDIICKIEYINNHHIKILFDCPVAAVTPGQSVVFYVSDICIGGGIIESRLPLL.

ATP-binding positions include 12 to 19 (AMSGGVDS) and methionine 38. The interval 98-100 (NPD) is interaction with target base in tRNA. The Nucleophile role is filled by cysteine 103. Cysteine 103 and cysteine 200 form a disulfide bridge. Glycine 128 is an ATP binding site. Positions 150–152 (KDQ) are interaction with tRNA. Cysteine 200 functions as the Cysteine persulfide intermediate in the catalytic mechanism. The tract at residues 312–313 (RY) is interaction with tRNA.

It belongs to the MnmA/TRMU family. In terms of assembly, interacts with TusE.

It is found in the cytoplasm. The catalysed reaction is S-sulfanyl-L-cysteinyl-[protein] + uridine(34) in tRNA + AH2 + ATP = 2-thiouridine(34) in tRNA + L-cysteinyl-[protein] + A + AMP + diphosphate + H(+). In terms of biological role, catalyzes the 2-thiolation of uridine at the wobble position (U34) of tRNA(Lys), tRNA(Glu) and tRNA(Gln), leading to the formation of s(2)U34, the first step of tRNA-mnm(5)s(2)U34 synthesis. Sulfur is provided by IscS, via a sulfur-relay system. Binds ATP and its substrate tRNAs. This chain is tRNA-specific 2-thiouridylase MnmA, found in Buchnera aphidicola subsp. Acyrthosiphon pisum (strain APS) (Acyrthosiphon pisum symbiotic bacterium).